A 403-amino-acid chain; its full sequence is Poly(rC)-binding protein 4 (403 aa).

KH domains lie at 17–67, 101–154, and 241–293; these read TLTL…TITG, PVTL…TVSG, and TSSQ…TITG.

The protein resides in the cytoplasm. Its function is as follows. Single-stranded nucleic acid binding protein that binds preferentially to oligo dC. In Homo sapiens (Human), this protein is Poly(rC)-binding protein 4 (PCBP4).